We begin with the raw amino-acid sequence, 374 residues long: MEMO1 family protein aq_1336 (374 aa).

The protein belongs to the MEMO1 family.

The polypeptide is MEMO1 family protein aq_1336 (Aquifex aeolicus (strain VF5)).